Consider the following 754-residue polypeptide: Glutathione biosynthesis bifunctional protein GshAB (754 aa).

Residues 1–332 (MTLNQLLQKL…QGHALNEKIA (332 aa)) form a glutamate--cysteine ligase region. One can recognise an ATP-grasp domain in the interval 488–746 (KKILADAGFP…ITTKILDKLF (259 aa)). Residue 515-573 (PLIKDKQIVVKPKSTNFGLGISIFQEPASLDNYQKALEIAFAEDTSVLVEEFIPGTEYR) coordinates ATP. Positions 695, 716, and 718 each coordinate Mg(2+). Mn(2+)-binding residues include aspartate 695, glutamate 716, and asparagine 718.

In the N-terminal section; belongs to the glutamate--cysteine ligase type 1 family. Type 2 subfamily. As to quaternary structure, monomer. Mg(2+) is required as a cofactor. The cofactor is Mn(2+).

The catalysed reaction is L-cysteine + L-glutamate + ATP = gamma-L-glutamyl-L-cysteine + ADP + phosphate + H(+). It carries out the reaction gamma-L-glutamyl-L-cysteine + glycine + ATP = glutathione + ADP + phosphate + H(+). It participates in sulfur metabolism; glutathione biosynthesis; glutathione from L-cysteine and L-glutamate: step 1/2. It functions in the pathway sulfur metabolism; glutathione biosynthesis; glutathione from L-cysteine and L-glutamate: step 2/2. Its function is as follows. Synthesizes glutathione from L-glutamate and L-cysteine via gamma-L-glutamyl-L-cysteine. In Streptococcus thermophilus (strain CNRZ 1066), this protein is Glutathione biosynthesis bifunctional protein GshAB.